Here is a 621-residue protein sequence, read N- to C-terminus: DnaJ homolog subfamily C member 2 (621 aa).

At methionine 1 the chain carries N-acetylmethionine. Positions 23 to 31 (STLCQVEPV) are epitope (recognized by CD8(+) cytotoxic T-lymphocytes). Phosphoserine occurs at positions 47, 49, 60, and 63. The J domain occupies 88–161 (DHYAVLGLGH…VKRRAFNSVD (74 aa)). The ZRF1-UBD stretch occupies residues 160–250 (VDPTFDNSVP…RDERRWIEKQ (91 aa)). Disordered regions lie at residues 294–315 (EKKA…QRQA) and 426–453 (KEEA…GSKN). 2 consecutive SANT domains span residues 449 to 511 (NGSK…KLDP) and 549 to 604 (TDFT…EMVK).

As to quaternary structure, component of ribosome-associated complex (RAC), a heterodimer composed of Hsp70/DnaK-type chaperone HSPA14 and Hsp40/DnaJ-type chaperone DNAJC2. Interacts (via ZRF1-UBD region) with ID1. Post-translationally, phosphorylated in M (mitotic) phase. As to expression, widely expressed.

The protein localises to the nucleus. Its subcellular location is the cytoplasm. The protein resides in the cytosol. Its function is as follows. Acts both as a chaperone in the cytosol and as a chromatin regulator in the nucleus. When cytosolic, acts as a molecular chaperone: component of the ribosome-associated complex (RAC), a complex involved in folding or maintaining nascent polypeptides in a folding-competent state. In the RAC complex, stimulates the ATPase activity of the ribosome-associated pool of Hsp70-type chaperones HSPA14 that bind to the nascent polypeptide chain. When nuclear, mediates the switching from polycomb-repressed genes to an active state: specifically recruited at histone H2A ubiquitinated at 'Lys-119' (H2AK119ub), and promotes the displacement of the polycomb PRC1 complex from chromatin, thereby facilitating transcription activation. The chain is DnaJ homolog subfamily C member 2 (DNAJC2) from Homo sapiens (Human).